The sequence spans 109 residues: uncharacterized protein (109 aa).

The protein to M.jannaschii MJ1244 and MJ1245 and M.thermoautotrophicum MTH1110.

This is an uncharacterized protein from Methanococcus maripaludis (Methanococcus deltae).